The following is a 602-amino-acid chain: UvrABC system protein C (602 aa).

The region spanning 15–100 (DQSGVYHYFD…IKQLKPKYNI (86 aa)) is the GIY-YIG domain. Positions 206 to 241 (SKLISRLKERMEKLAENLRFEEAGELRDRIEKIKRI) constitute a UVR domain.

It belongs to the UvrC family. As to quaternary structure, interacts with UvrB in an incision complex.

The protein localises to the cytoplasm. In terms of biological role, the UvrABC repair system catalyzes the recognition and processing of DNA lesions. UvrC both incises the 5' and 3' sides of the lesion. The N-terminal half is responsible for the 3' incision and the C-terminal half is responsible for the 5' incision. In Wolinella succinogenes (strain ATCC 29543 / DSM 1740 / CCUG 13145 / JCM 31913 / LMG 7466 / NCTC 11488 / FDC 602W) (Vibrio succinogenes), this protein is UvrABC system protein C.